A 1186-amino-acid chain; its full sequence is MTNETIDQTRTPDQTQSQTAFDPQQFINNLQVAFIKVDNVVASFDPDQKPIVDKNDRDNRQAFDGISQLREEYSNKAIKNPTKKNQYFSDFIDKSNDLINKDNLIDVESSTKSFQKFGDQRYQIFTSWVSHQKDPSKINTRSIRNFMENIIQPPIPDDKEKAEFLKSAKQSFAGIIIGNQIRTDQKFMGVFDESLKERQEAEKNGGPTGGDWLDIFLSFIFNKKQSSDVKEAINQEPVPHVQPDIATTTTDIQGLPPEARDLLDERGNFSKFTLGDMEMLDVEGVADIDPNYKFNQLLIHNNALSSVLMGSHNGIEPEKVSLLYAGNGGFGDKHDWNATVGYKDQQGNNVATLINVHMKNGSGLVIAGGEKGINNPSFYLYKEDQLTGSQRALSQEEIRNKVDFMEFLAQNNTKLDNLSEKEKEKFQNEIEDFQKDSKAYLDALGNDRIAFVSKKDTKHSALITEFNNGDLSYTLKDYGKKADKALDREKNVTLQGSLKHDGVMFVDYSNFKYTNASKNPNKGVGATNGVSHLEAGFNKVAVFNLPDLNNLAITSFVRRNLENKLTAKGLSLQEANKLIKDFLSSNKELAGKALNFNKAVAEAKSTGNYDEVKKAQKDLEKSLRKREHLEKEVEKKLESKSGNKNKMEAKAQANSQKDEIFALINKEANRDARAIAYTQNLKGIKRELSDKLEKISKDLKDFSKSFDEFKNGKNKDFSKAEETLKALKGSVKDLGINPEWISKVENLNAALNEFKNGKNKDFSKVTQAKSDLENSVKDVIINQKVTDKVDNLNQAVSVAKAMGDFSRVEQVLADLKNFSKEQLAQQAQKNEDFNTGKNSELYQSVKNSVNKTLVGNGLSGIEATALAKNFSDIKKELNEKFKNFNNNNNGLKNSTEPIYAKVNKKKTGQVASPEEPIYTQVAKKVNAKIDRLNQIASGLGGVGQAAGFPLKRHDKVDDLSKVGLSASPEPIYATIDDLGGPFPLKRHDKVDDLSKVGRSRNQELAQKIDNLNQAVSEAKAGFFGNLEQTIDKLKDSTKKNVMNLYVESAKKVPASLSAKLDNYAINSHTRINSNIQNGAINEKATGMLTQKNPEWLKLVNDKIVAHNVGSVSLSEYDKIGFNQKNMKDYSDSFKFSTKLNNAVKDIKSGFTHFLANAFSTGYYCLARENAEHGIKNVNTKGGFQKS.

A compositionally biased stretch (basic and acidic residues) spans E630–A649. The tract at residues E630–Q652 is disordered.

Functionally, may be necessary for the transcription, folding, export, or function of the cytotoxin. The sequence is that of Cytotoxicity-associated immunodominant antigen (cagA) from Helicobacter pylori (strain ATCC 700392 / 26695) (Campylobacter pylori).